We begin with the raw amino-acid sequence, 470 residues long: MVELKGTHDTICAIATPVGEGGIGIIKISGPEATAIARRLFMRSGSGSGLESHRLYHGWIKDPVTGQSLDEVLVGTMAAPHTYTREDVVEINCHSGFAVLNRILELVLREGARLADPGEFTRRAFLNGRIDLSQAEAVIEVIRSRSEQGLLLANRLLRGALGEKVRSWREGLLELQSRIEATIDFEDDLDEDALCAVSDRARFVTRLDGELIPALSAALESAERSRALREGVSLVLAGKPNVGKSSLLNALVGRDRAIVTPFPGTTRDVVEDTFLLSGILVRVLDTAGLRHDPDEIESFGIARTIQSLEEADIVLCVMDRSRPLSAEDDAVVEAVASRPFVIVLNKEDLPPAISTGKIRERYGENVPIMAISALRPPDVERLRDFLNQRFLRLPLEQSGSAIVPNLRQRGCIEKALQAMIRARDLISGGGFWELASTELRTARNELDSVLGWNGDDALLDRIFSDFCIGK.

Positions 27, 90, and 129 each coordinate (6S)-5-formyl-5,6,7,8-tetrahydrofolate. The TrmE-type G domain maps to Gly-231 to Leu-391. GTP-binding positions include Asn-241–Ser-246, Thr-260–Thr-266, and Asp-285–Gly-288. Residues Ser-245 and Thr-266 each contribute to the Mg(2+) site. Lys-470 contributes to the (6S)-5-formyl-5,6,7,8-tetrahydrofolate binding site.

It belongs to the TRAFAC class TrmE-Era-EngA-EngB-Septin-like GTPase superfamily. TrmE GTPase family. In terms of assembly, homodimer. Heterotetramer of two MnmE and two MnmG subunits. Requires K(+) as cofactor.

It is found in the cytoplasm. Functionally, exhibits a very high intrinsic GTPase hydrolysis rate. Involved in the addition of a carboxymethylaminomethyl (cmnm) group at the wobble position (U34) of certain tRNAs, forming tRNA-cmnm(5)s(2)U34. The protein is tRNA modification GTPase MnmE of Syntrophobacter fumaroxidans (strain DSM 10017 / MPOB).